We begin with the raw amino-acid sequence, 274 residues long: Large ribosomal subunit protein uL2 (274 aa).

Disordered regions lie at residues 35–55 (FGKK…RHRG) and 224–274 (AMNP…KLKG). The span at 45–55 (NHGRITTRHRG) shows a compositional bias: basic residues. Basic and acidic residues predominate over residues 263-274 (KSSDKYIKKLKG).

It belongs to the universal ribosomal protein uL2 family. In terms of assembly, part of the 50S ribosomal subunit. Forms a bridge to the 30S subunit in the 70S ribosome.

One of the primary rRNA binding proteins. Required for association of the 30S and 50S subunits to form the 70S ribosome, for tRNA binding and peptide bond formation. It has been suggested to have peptidyltransferase activity; this is somewhat controversial. Makes several contacts with the 16S rRNA in the 70S ribosome. In Wolbachia pipientis subsp. Culex pipiens (strain wPip), this protein is Large ribosomal subunit protein uL2.